The following is a 144-amino-acid chain: 3-hydroxyacyl-[acyl-carrier-protein] dehydratase FabZ (144 aa).

His48 is an active-site residue.

The protein belongs to the thioester dehydratase family. FabZ subfamily.

It is found in the cytoplasm. It catalyses the reaction a (3R)-hydroxyacyl-[ACP] = a (2E)-enoyl-[ACP] + H2O. Involved in unsaturated fatty acids biosynthesis. Catalyzes the dehydration of short chain beta-hydroxyacyl-ACPs and long chain saturated and unsaturated beta-hydroxyacyl-ACPs. The sequence is that of 3-hydroxyacyl-[acyl-carrier-protein] dehydratase FabZ from Listeria welshimeri serovar 6b (strain ATCC 35897 / DSM 20650 / CCUG 15529 / CIP 8149 / NCTC 11857 / SLCC 5334 / V8).